A 562-amino-acid polypeptide reads, in one-letter code: Phosphoacetylglucosamine mutase (562 aa).

The active-site Phosphoserine intermediate is the serine 74. Mg(2+) contacts are provided by serine 74, aspartate 291, aspartate 293, and aspartate 295. Substrate-binding positions include glutamate 395 to asparagine 397, arginine 526 to threonine 530, and arginine 535.

The protein belongs to the phosphohexose mutase family. Mg(2+) serves as cofactor.

The catalysed reaction is N-acetyl-alpha-D-glucosamine 1-phosphate = N-acetyl-D-glucosamine 6-phosphate. The protein operates within nucleotide-sugar biosynthesis; UDP-N-acetyl-alpha-D-glucosamine biosynthesis; N-acetyl-alpha-D-glucosamine 1-phosphate from alpha-D-glucosamine 6-phosphate (route I): step 2/2. Functionally, interconverts GlcNAc-6-P and GlcNAc-1-P. In Oryza sativa subsp. japonica (Rice), this protein is Phosphoacetylglucosamine mutase.